The following is a 248-amino-acid chain: DNA repair protein RecO (248 aa).

Belongs to the RecO family.

In terms of biological role, involved in DNA repair and RecF pathway recombination. The protein is DNA repair protein RecO of Bacillus mycoides (strain KBAB4) (Bacillus weihenstephanensis).